A 137-amino-acid polypeptide reads, in one-letter code: Small ribosomal subunit protein bS6 (137 aa).

This sequence belongs to the bacterial ribosomal protein bS6 family.

Functionally, binds together with bS18 to 16S ribosomal RNA. This Sulfurimonas denitrificans (strain ATCC 33889 / DSM 1251) (Thiomicrospira denitrificans (strain ATCC 33889 / DSM 1251)) protein is Small ribosomal subunit protein bS6.